The sequence spans 286 residues: Small ribosomal subunit protein uS2 (286 aa).

Residues 231–286 (ERAQAEAKAAAGDNDAPVSSEGESTEVASDAASTASETTATSSDESAAESSEAESK) form a disordered region. The span at 255–280 (TEVASDAASTASETTATSSDESAAES) shows a compositional bias: low complexity.

The protein belongs to the universal ribosomal protein uS2 family.

The sequence is that of Small ribosomal subunit protein uS2 from Corynebacterium kroppenstedtii (strain DSM 44385 / JCM 11950 / CIP 105744 / CCUG 35717).